Here is a 701-residue protein sequence, read N- to C-terminus: Elongation factor G (701 aa).

One can recognise a tr-type G domain in the interval 11-287 (TKVRNIGIMA…AVIDYLPSPL (277 aa)). GTP is bound by residues 20-27 (AHIDAGKT), 84-88 (DTPGH), and 138-141 (NKMD).

The protein belongs to the TRAFAC class translation factor GTPase superfamily. Classic translation factor GTPase family. EF-G/EF-2 subfamily.

The protein resides in the cytoplasm. Its function is as follows. Catalyzes the GTP-dependent ribosomal translocation step during translation elongation. During this step, the ribosome changes from the pre-translocational (PRE) to the post-translocational (POST) state as the newly formed A-site-bound peptidyl-tRNA and P-site-bound deacylated tRNA move to the P and E sites, respectively. Catalyzes the coordinated movement of the two tRNA molecules, the mRNA and conformational changes in the ribosome. In Mycobacterium avium (strain 104), this protein is Elongation factor G.